Consider the following 327-residue polypeptide: DNA-directed RNA polymerase subunit alpha (327 aa).

Positions 1-231 (MIYQMQMPAK…DHVLLFADFS (231 aa)) are alpha N-terminal domain (alpha-NTD). The segment at 247–327 (DEFETMRRLL…GMDITRYQMK (81 aa)) is alpha C-terminal domain (alpha-CTD).

This sequence belongs to the RNA polymerase alpha chain family. In terms of assembly, homodimer. The RNAP catalytic core consists of 2 alpha, 1 beta, 1 beta' and 1 omega subunit. When a sigma factor is associated with the core the holoenzyme is formed, which can initiate transcription.

It carries out the reaction RNA(n) + a ribonucleoside 5'-triphosphate = RNA(n+1) + diphosphate. Functionally, DNA-dependent RNA polymerase catalyzes the transcription of DNA into RNA using the four ribonucleoside triphosphates as substrates. The polypeptide is DNA-directed RNA polymerase subunit alpha (Chlorobium chlorochromatii (strain CaD3)).